The chain runs to 228 residues: L-ribulose-5-phosphate 4-epimerase UlaF (228 aa).

Residues 26–27 (GN), 43–44 (SG), and 72–73 (SS) contribute to the substrate site. Zn(2+) contacts are provided by D74, H93, and H95. Residue D118 is the Proton donor/acceptor of the active site. H167 contacts Zn(2+). Y225 acts as the Proton donor/acceptor in catalysis.

The protein belongs to the aldolase class II family. AraD/FucA subfamily. It depends on Zn(2+) as a cofactor.

It catalyses the reaction L-ribulose 5-phosphate = D-xylulose 5-phosphate. Its pathway is cofactor degradation; L-ascorbate degradation; D-xylulose 5-phosphate from L-ascorbate: step 4/4. Functionally, catalyzes the isomerization of L-ribulose 5-phosphate to D-xylulose 5-phosphate. Is involved in the anaerobic L-ascorbate utilization. This Escherichia coli O139:H28 (strain E24377A / ETEC) protein is L-ribulose-5-phosphate 4-epimerase UlaF.